A 377-amino-acid polypeptide reads, in one-letter code: Lipoyl synthase, mitochondrial (377 aa).

C103, C108, C114, C134, C138, C141, and S349 together coordinate [4Fe-4S] cluster. Positions 119–338 (EHGTQTATIM…EERGNELGFL (220 aa)) constitute a Radical SAM core domain.

Belongs to the radical SAM superfamily. Lipoyl synthase family. [4Fe-4S] cluster serves as cofactor.

The protein localises to the mitochondrion. The enzyme catalyses [[Fe-S] cluster scaffold protein carrying a second [4Fe-4S](2+) cluster] + N(6)-octanoyl-L-lysyl-[protein] + 2 oxidized [2Fe-2S]-[ferredoxin] + 2 S-adenosyl-L-methionine + 4 H(+) = [[Fe-S] cluster scaffold protein] + N(6)-[(R)-dihydrolipoyl]-L-lysyl-[protein] + 4 Fe(3+) + 2 hydrogen sulfide + 2 5'-deoxyadenosine + 2 L-methionine + 2 reduced [2Fe-2S]-[ferredoxin]. The protein operates within protein modification; protein lipoylation via endogenous pathway; protein N(6)-(lipoyl)lysine from octanoyl-[acyl-carrier-protein]: step 2/2. Functionally, catalyzes the radical-mediated insertion of two sulfur atoms into the C-6 and C-8 positions of the octanoyl moiety bound to the lipoyl domains of lipoate-dependent enzymes, thereby converting the octanoylated domains into lipoylated derivatives. This chain is Lipoyl synthase, mitochondrial, found in Drosophila sechellia (Fruit fly).